We begin with the raw amino-acid sequence, 194 residues long: Crossover junction endodeoxyribonuclease RuvC (194 aa).

Catalysis depends on residues D7, E68, and D141. Residues D7, E68, and D141 each coordinate Mg(2+).

This sequence belongs to the RuvC family. As to quaternary structure, homodimer which binds Holliday junction (HJ) DNA. The HJ becomes 2-fold symmetrical on binding to RuvC with unstacked arms; it has a different conformation from HJ DNA in complex with RuvA. In the full resolvosome a probable DNA-RuvA(4)-RuvB(12)-RuvC(2) complex forms which resolves the HJ. Requires Mg(2+) as cofactor.

The protein resides in the cytoplasm. It catalyses the reaction Endonucleolytic cleavage at a junction such as a reciprocal single-stranded crossover between two homologous DNA duplexes (Holliday junction).. Its function is as follows. The RuvA-RuvB-RuvC complex processes Holliday junction (HJ) DNA during genetic recombination and DNA repair. Endonuclease that resolves HJ intermediates. Cleaves cruciform DNA by making single-stranded nicks across the HJ at symmetrical positions within the homologous arms, yielding a 5'-phosphate and a 3'-hydroxyl group; requires a central core of homology in the junction. The consensus cleavage sequence is 5'-(A/T)TT(C/G)-3'. Cleavage occurs on the 3'-side of the TT dinucleotide at the point of strand exchange. HJ branch migration catalyzed by RuvA-RuvB allows RuvC to scan DNA until it finds its consensus sequence, where it cleaves and resolves the cruciform DNA. This chain is Crossover junction endodeoxyribonuclease RuvC, found in Mycolicibacterium vanbaalenii (strain DSM 7251 / JCM 13017 / BCRC 16820 / KCTC 9966 / NRRL B-24157 / PYR-1) (Mycobacterium vanbaalenii).